The sequence spans 358 residues: S-adenosylmethionine:tRNA ribosyltransferase-isomerase (358 aa).

Belongs to the QueA family. In terms of assembly, monomer.

It localises to the cytoplasm. It catalyses the reaction 7-aminomethyl-7-carbaguanosine(34) in tRNA + S-adenosyl-L-methionine = epoxyqueuosine(34) in tRNA + adenine + L-methionine + 2 H(+). It functions in the pathway tRNA modification; tRNA-queuosine biosynthesis. In terms of biological role, transfers and isomerizes the ribose moiety from AdoMet to the 7-aminomethyl group of 7-deazaguanine (preQ1-tRNA) to give epoxyqueuosine (oQ-tRNA). The sequence is that of S-adenosylmethionine:tRNA ribosyltransferase-isomerase from Rhodopseudomonas palustris (strain BisA53).